A 165-amino-acid polypeptide reads, in one-letter code: Immunity protein YokJ (165 aa).

As to quaternary structure, probably interacts with cognate toxin YokI but not with other non-cognate toxins. The interaction inhibits the toxic activity of YokI.

It localises to the cytoplasm. Its function is as follows. Immunity component of one of 6 LXG toxin-immunity modules in this strain. They promote kin selection, mediate competition in biofilms, and drive spatial segregation of different strains, indicating that LXG toxins may help avoid warfare between strains in biofilms. Mediates intercellular competition during biofilm formation; disruption of the operon disadvantages the bacteria, but overexpression of the cognate immunity protein restores growth in competition with wild-type. In situ neutralizes the toxic effect of cognate toxin YokI. Neutralizes the ability to inhibit growth of cognate toxin YokI upon expression in E.coli. Does not have immunity protein activity on other LXG toxins. The chain is Immunity protein YokJ (yokJ) from Bacillus subtilis (strain 168).